Consider the following 54-residue polypeptide: Glutathione S-transferase 6.7 (54 aa).

The protein belongs to the GST superfamily. Theta family. In terms of assembly, homodimer. In terms of processing, the N-terminus is blocked.

The protein localises to the cytoplasm. The catalysed reaction is RX + glutathione = an S-substituted glutathione + a halide anion + H(+). Its function is as follows. Conjugation of reduced glutathione to a wide number of exogenous and endogenous hydrophobic electrophiles. The protein is Glutathione S-transferase 6.7 of Dicentrarchus labrax (European seabass).